The sequence spans 143 residues: Hemoglobin subunit alpha (143 aa).

One can recognise a Globin domain in the interval 2–143; it reads RFSQDDEVLI…IVHVLISLYR (142 aa). Residue histidine 60 participates in O2 binding. Residue histidine 89 participates in heme b binding.

This sequence belongs to the globin family. In terms of assembly, heterotetramer of two alpha chains and two beta chains. As to expression, red blood cells.

Involved in oxygen transport from the lung to the various peripheral tissues. This Lepidosiren paradoxus (South American lungfish) protein is Hemoglobin subunit alpha (HBA).